The following is a 275-amino-acid chain: Large ribosomal subunit protein uL2 (275 aa).

The disordered stretch occupies residues Gln-220–Lys-275. The span at Phe-257 to Lys-275 shows a compositional bias: basic residues.

It belongs to the universal ribosomal protein uL2 family. In terms of assembly, part of the 50S ribosomal subunit. Forms a bridge to the 30S subunit in the 70S ribosome.

Functionally, one of the primary rRNA binding proteins. Required for association of the 30S and 50S subunits to form the 70S ribosome, for tRNA binding and peptide bond formation. It has been suggested to have peptidyltransferase activity; this is somewhat controversial. Makes several contacts with the 16S rRNA in the 70S ribosome. The polypeptide is Large ribosomal subunit protein uL2 (Wolinella succinogenes (strain ATCC 29543 / DSM 1740 / CCUG 13145 / JCM 31913 / LMG 7466 / NCTC 11488 / FDC 602W) (Vibrio succinogenes)).